The following is a 478-amino-acid chain: Glycogen synthase (478 aa).

Residue Lys-15 coordinates ADP-alpha-D-glucose.

The protein belongs to the glycosyltransferase 1 family. Bacterial/plant glycogen synthase subfamily.

It catalyses the reaction [(1-&gt;4)-alpha-D-glucosyl](n) + ADP-alpha-D-glucose = [(1-&gt;4)-alpha-D-glucosyl](n+1) + ADP + H(+). It participates in glycan biosynthesis; glycogen biosynthesis. Synthesizes alpha-1,4-glucan chains using ADP-glucose. The protein is Glycogen synthase of Bacillus cytotoxicus (strain DSM 22905 / CIP 110041 / 391-98 / NVH 391-98).